We begin with the raw amino-acid sequence, 301 residues long: Porphobilinogen deaminase (301 aa).

Position 240 is an S-(dipyrrolylmethanemethyl)cysteine (Cys-240).

This sequence belongs to the HMBS family. Monomer. Dipyrromethane serves as cofactor.

It carries out the reaction 4 porphobilinogen + H2O = hydroxymethylbilane + 4 NH4(+). The protein operates within porphyrin-containing compound metabolism; protoporphyrin-IX biosynthesis; coproporphyrinogen-III from 5-aminolevulinate: step 2/4. Tetrapolymerization of the monopyrrole PBG into the hydroxymethylbilane pre-uroporphyrinogen in several discrete steps. This is Porphobilinogen deaminase from Clostridioides difficile (strain 630) (Peptoclostridium difficile).